Here is a 309-residue protein sequence, read N- to C-terminus: Enoyl-CoA hydratase 2, peroxisomal (309 aa).

Substrate is bound by residues 95-96 (HG), K124, 208-213 (DYNPLH), G231, and F261. In terms of domain architecture, MaoC-like spans 183–295 (PQRQPLTVCE…TKVKERNKTV (113 aa)). Residues 307–309 (SSL) carry the Microbody targeting signal motif.

As to expression, ubiquitous.

It localises to the peroxisome. It carries out the reaction a (3R)-3-hydroxyacyl-CoA = a (2E)-enoyl-CoA + H2O. Its pathway is lipid metabolism; fatty acid beta-oxidation. In terms of biological role, bidirectional monofunctional enoyl-CoA hydratase 2 involved in the degradation of even cis-unsaturated fatty acids. Devoid of 3-hydroxyacyl-CoA dehydrogenase activity. The sequence is that of Enoyl-CoA hydratase 2, peroxisomal (ECH2) from Arabidopsis thaliana (Mouse-ear cress).